Here is an 866-residue protein sequence, read N- to C-terminus: Pentatricopeptide repeat-containing protein At1g15510, chloroplastic (866 aa).

A chloroplast-targeting transit peptide spans 1-52 (MASSAQSPHFYLNPGKSNSFQSKAYKQRNVNFYWNFGIRRLFLRKSQGLSVL). PPR repeat units lie at residues 58 to 92 (STHF…RVAV), 93 to 123 (DEDV…ALSS), 128 to 158 (GVEL…MSER), 159 to 194 (NLFS…GVKP), 195 to 229 (DVYT…GYEL), 230 to 260 (DIDV…MPRR), 261 to 295 (DIIS…SVDP), 296 to 330 (DLMT…GFAV), 331 to 365 (DISV…DIVS), 366 to 396 (WTTM…SVKP), 397 to 431 (DEIT…RLIS), 432 to 466 (YVIV…NVIS), 467 to 493 (WTSI…MKMT), 497 to 531 (NAIT…GVGL), 532 to 561 (DDFL…SQKK), 562 to 596 (DVTS…RVRP), 597 to 631 (DEIT…GVTP), and 632 to 662 (NLKH…MPVT). Residues 667-742 (VWGALLNACR…DAGCSWVEVK (76 aa)) form a type E motif region. The type E(+) motif stretch occupies residues 743–773 (GKVHAFLSDDKYHPQTKEINTVLEGFYEKMS). Residues 774–866 (EVGLTKISES…FKDGECSCGD (93 aa)) are type DYW motif.

It belongs to the PPR family. PCMP-H subfamily.

Its subcellular location is the plastid. It is found in the chloroplast. In terms of biological role, regulates the RNA editing of the chloroplast transcript accD, and is essential for the early stages of chloroplast biogenesis. Required for the RNA editing of the chloroplast transcript ndhF. This chain is Pentatricopeptide repeat-containing protein At1g15510, chloroplastic (PCMP-H73), found in Arabidopsis thaliana (Mouse-ear cress).